Consider the following 200-residue polypeptide: Acyl-homoserine-lactone synthase (200 aa).

Belongs to the autoinducer synthase family.

The enzyme catalyses a fatty acyl-[ACP] + S-adenosyl-L-methionine = an N-acyl-L-homoserine lactone + S-methyl-5'-thioadenosine + holo-[ACP] + H(+). Required for the synthesis of BHL (N-butanoyl-L-homoserine lactone). In Serratia liquefaciens, this protein is Acyl-homoserine-lactone synthase (swrI).